Consider the following 427-residue polypeptide: MTDSNTLFSRAQQVIPGGVNSPVRAFKGVGGTPVFIQKAKGAYIWDTDDKQYVDYVGSWGPMILGHNHPAILSAVIKTAENGLSFGAPTPIEIDLAELVCKLIPSMEMVRMVSSGTEATMSAIRLARGYTNRDKIIKFEGCYHGHADSLLVKAGSGALTLGQPNSPGVPADFAKHTLTCTYNDLESVKQAFEQYPQDIACIIVEPVAGNMNCVPPQNNFLQGLRELCNQYGAVFIIDEVMTGFRVALGGAQSYYNVEPDLTCLGKVIGGGMPVGAFGGKKEIMQFIAPTGPVYQAGTLSGNPIAMAAGLACLTELQKAGNQERLAQLTEKLALGLKALADKHHVPFTVNYVGGMFGLFFTDKAQVTCYQDVMACDTEKFKVFFHKMLDEGVYLAPSAFEAGFMSLAHTDADIDRTLTAADKAFAALA.

The residue at position 265 (K265) is an N6-(pyridoxal phosphate)lysine.

This sequence belongs to the class-III pyridoxal-phosphate-dependent aminotransferase family. HemL subfamily. In terms of assembly, homodimer. It depends on pyridoxal 5'-phosphate as a cofactor.

The protein resides in the cytoplasm. It carries out the reaction (S)-4-amino-5-oxopentanoate = 5-aminolevulinate. It functions in the pathway porphyrin-containing compound metabolism; protoporphyrin-IX biosynthesis; 5-aminolevulinate from L-glutamyl-tRNA(Glu): step 2/2. This is Glutamate-1-semialdehyde 2,1-aminomutase from Mannheimia succiniciproducens (strain KCTC 0769BP / MBEL55E).